Here is a 293-residue protein sequence, read N- to C-terminus: Energy-coupling factor transporter ATP-binding protein EcfA2 (293 aa).

One can recognise an ABC transporter domain in the interval 3–246; the sequence is ITFQKVEHRY…ADELEKIGVD (244 aa). 40–47 is an ATP binding site; the sequence is GHTGSGKS.

It belongs to the ABC transporter superfamily. Energy-coupling factor EcfA family. As to quaternary structure, forms a stable energy-coupling factor (ECF) transporter complex composed of 2 membrane-embedded substrate-binding proteins (S component), 2 ATP-binding proteins (A component) and 2 transmembrane proteins (T component).

It is found in the cell membrane. ATP-binding (A) component of a common energy-coupling factor (ECF) ABC-transporter complex. Unlike classic ABC transporters this ECF transporter provides the energy necessary to transport a number of different substrates. This chain is Energy-coupling factor transporter ATP-binding protein EcfA2, found in Bacillus cereus (strain ZK / E33L).